The following is a 299-amino-acid chain: Transcription factor MYB17 (299 aa).

2 consecutive HTH myb-type domains span residues 9 to 61 and 62 to 116; these read KIGL…TNYL and RPDI…KKRL. 2 DNA-binding regions (H-T-H motif) span residues 37-61 and 89-112; these read WRTLPKLAGLLRCGKSCRLRWTNYL and WAAIAAQLPGRTDNEIKNLWNTHL.

As to quaternary structure, interacts with LFY. As to expression, expressed in the shoot apex, young flower buds, developing carpels and siliques. Expressed in floral meristem, initiating floral primordia and developing flowers.

It is found in the nucleus. Transcription factor that may play a role in flower development by repressing ANT. Regulates the transition of meristem identity from vegetative growth to flowering. Acts downstream of LFY and upstream of AP1. Directly activates AP1 to promote floral fate. Together with LFY and AP1 may constitute a regulatory network that contributes to an abrupt and robust meristem identity transition. The chain is Transcription factor MYB17 from Arabidopsis thaliana (Mouse-ear cress).